A 344-amino-acid polypeptide reads, in one-letter code: 2-methyl-6-phytyl-1,4-hydroquinone methyltransferase, chloroplastic (344 aa).

The transit peptide at 1–62 directs the protein to the chloroplast; the sequence is MACSMLNGVD…LTTVTKCTLS (62 aa). Over 63–313 the chain is Chloroplast intermembrane; the sequence is ASERPASQPR…PVHPLVFLYR (251 aa). The segment at 121–130 is SAM motif I; that stretch reads VVDVGGGTGF. Positions 166-179 are SAM motif II; sequence CRIIEGDAEDLPFP. Residues 207–220 are SAM motif III; the sequence is RVLKLGGKACLIGP. The chain crosses the membrane as a helical span at residues 314-334; sequence FLLGALASTYYVLVPIYMWIK. At 335 to 344 the chain is on the stromal side; the sequence is DKIFPKGMPL.

This sequence belongs to the class I-like SAM-binding methyltransferase superfamily. MPBQ/MBSQ MT family.

Its subcellular location is the plastid. The protein localises to the chloroplast inner membrane. The catalysed reaction is 2-methyl-6-phytyl-1,4-benzene-1,4-diol + S-adenosyl-L-methionine = 2,3-dimethyl-6-phytylbenzene-1,4-diol + S-adenosyl-L-homocysteine + H(+). It carries out the reaction 2-methyl-6-(all-trans-nonaprenyl)benzene-1,4-diol + S-adenosyl-L-methionine = plastoquinol-9 + S-adenosyl-L-homocysteine + H(+). It catalyses the reaction 6-geranylgeranyl-2-methylbenzene-1,4-diol + S-adenosyl-L-methionine = 6-geranylgeranyl-2,3-dimethylbenzene-1,4-diol + S-adenosyl-L-homocysteine + H(+). Its pathway is cofactor biosynthesis; tocopherol biosynthesis. Its function is as follows. Involved in a key methylation step in both tocopherols (vitamin E) and plastoquinone synthesis. Catalyzes the conversion of 2-methyl-6-phytyl-1,4-hydroquinone (MPBQ) to 2,3-dimethyl-6-phytyl-1,4-hydroquinone (DMPQ, a substrate for tocopherol cyclase), and 2-methyl-6-solanyl-1,4-benzoquinone (MSBQ) to plastoquinone. This Spinacia oleracea (Spinach) protein is 2-methyl-6-phytyl-1,4-hydroquinone methyltransferase, chloroplastic.